The chain runs to 29 residues: Toxin Bcg III 15.67 (29 aa).

An EGF-like domain is found at 2 to 29 (QGTACTGEHAHSFCLNGGTCRHIQQLGE). A disulfide bridge connects residues C6 and C21.

Its subcellular location is the secreted. The protein localises to the nematocyst. In terms of biological role, has both toxic and EGF activity. This chain is Toxin Bcg III 15.67, found in Bunodosoma cangicum (Sea anemone).